Here is a 144-residue protein sequence, read N- to C-terminus: Arsenate reductase ArsI1 (144 aa).

The active-site Nucleophile; cysteine thioarsenate intermediate is cysteine 14.

The protein belongs to the ArsC family.

The enzyme catalyses [glutaredoxin]-dithiol + arsenate + glutathione + H(+) = glutathionyl-S-S-[glutaredoxin] + arsenite + H2O. In terms of biological role, catalyzes the reduction of arsenate [As(V)] to arsenite [As(III)]. Does not constitute the major arsenate reductase in cells: essential only in the absence of ArsC (AC P74313). The sequence is that of Arsenate reductase ArsI1 from Synechocystis sp. (strain ATCC 27184 / PCC 6803 / Kazusa).